Here is a 217-residue protein sequence, read N- to C-terminus: Oxygen regulatory protein NreC (217 aa).

The Response regulatory domain maps to 2–119; that stretch reads KIVIADDHAV…QLLLAVRTVY (118 aa). Aspartate 53 carries the post-translational modification 4-aspartylphosphate. Residues 148-213 form the HTH luxR-type domain; that stretch reads TNDPFKILSK…ELVEYALKKK (66 aa). Positions 172–191 form a DNA-binding region, H-T-H motif; that stretch reads NKDIAEKLFVSVKTVEAHKT.

Phosphorylated by NreB.

It is found in the cytoplasm. In terms of biological role, member of the two-component regulatory system NreB/NreC involved in the control of dissimilatory nitrate/nitrite reduction in response to oxygen. Phosphorylated NreC binds to a GC-rich palindromic sequence at the promoters of the nitrate (narGHJI) and nitrite (nir) reductase operons, as well as the putative nitrate transporter gene narT, and activates their expression. This chain is Oxygen regulatory protein NreC (nreC), found in Staphylococcus haemolyticus (strain JCSC1435).